The following is a 452-amino-acid chain: tRNA modification GTPase MnmE (452 aa).

Residues Arg21, Glu82, and Arg121 each contribute to the (6S)-5-formyl-5,6,7,8-tetrahydrofolate site. In terms of domain architecture, TrmE-type G spans 217 to 373; sequence GINTTIIGKP…LENKIIEMFN (157 aa). Asn227 lines the K(+) pocket. Residues 227–232, 246–252, and 271–274 each bind GTP; these read NVGKSS, TDIPGTT, and DTAG. Residue Ser231 coordinates Mg(2+). K(+)-binding residues include Thr246, Ile248, and Thr251. Thr252 contacts Mg(2+). (6S)-5-formyl-5,6,7,8-tetrahydrofolate is bound at residue Lys452.

The protein belongs to the TRAFAC class TrmE-Era-EngA-EngB-Septin-like GTPase superfamily. TrmE GTPase family. Homodimer. Heterotetramer of two MnmE and two MnmG subunits. Requires K(+) as cofactor.

The protein resides in the cytoplasm. Its function is as follows. Exhibits a very high intrinsic GTPase hydrolysis rate. Involved in the addition of a carboxymethylaminomethyl (cmnm) group at the wobble position (U34) of certain tRNAs, forming tRNA-cmnm(5)s(2)U34. This is tRNA modification GTPase MnmE from Finegoldia magna (strain ATCC 29328 / DSM 20472 / WAL 2508) (Peptostreptococcus magnus).